The sequence spans 222 residues: Vesicle transport v-SNARE 12 (222 aa).

S2 is subject to N-acetylserine. The Cytoplasmic portion of the chain corresponds to 2–199 (SDVFEGYERQ…MSRRMTRNKW (198 aa)). Residues 68-95 (KAVCLSKLREYKSDLNQLKKEFKRVSSA) are a coiled coil. The helical; Anchor for type IV membrane protein transmembrane segment at 200 to 220 (IITSVIVALVLAIILIISYKL) threads the bilayer. Residues 221-222 (SH) are Vesicular-facing.

It belongs to the VTI1 family. In terms of assembly, forms SNARE complexes with the t-SNAREs SYP61 and either SYP41 or SYP42, and with a much lower affinity with SYP51 in the TGN. Also interacts with VPS45, a Sec1 protein, but not with SYP21 or SYP22. Binds to EPSIN2. Core constituent of the SNARE complex required for membrane fusion at the trans-Golgi network. Interacts with SCYL2B. As to expression, expressed in roots, stems, flowers and leaves.

Its subcellular location is the golgi apparatus. It is found in the trans-Golgi network membrane. The protein resides in the prevacuolar compartment membrane. The protein localises to the cell membrane. In terms of biological role, together with either SYP41 or SYP61, required for membrane fusion; the fusion of phospholipid vesicles containing SYP41 or SYP61 and VTI12 is triggered by YKT61 and YKT62. Functions as a v-SNARE responsible for the docking or fusion of transport vesicles within the trans-Golgi network (TGN) and mediates liposome fusion. Necessary to deliver proteins to the protein storage vacuole (PSV). May be also involved in retrograde traffic to the cis-Golgi. In Arabidopsis thaliana (Mouse-ear cress), this protein is Vesicle transport v-SNARE 12.